Reading from the N-terminus, the 20-residue chain is Bulb protein (20 aa).

The interval 1 to 20 (APDVHTRXTQNGLPPGXLPS) is disordered.

This is Bulb protein from Narcissus pseudonarcissus (Daffodil).